Consider the following 98-residue polypeptide: NADH-ubiquinone oxidoreductase chain 4L (98 aa).

The next 3 helical transmembrane spans lie at 1-21 (MSLT…GLLL), 29-49 (SLLC…MTIL), and 61-81 (IILL…LVMV).

This sequence belongs to the complex I subunit 4L family. Core subunit of respiratory chain NADH dehydrogenase (Complex I) which is composed of 45 different subunits.

It localises to the mitochondrion inner membrane. The enzyme catalyses a ubiquinone + NADH + 5 H(+)(in) = a ubiquinol + NAD(+) + 4 H(+)(out). Functionally, core subunit of the mitochondrial membrane respiratory chain NADH dehydrogenase (Complex I) which catalyzes electron transfer from NADH through the respiratory chain, using ubiquinone as an electron acceptor. Part of the enzyme membrane arm which is embedded in the lipid bilayer and involved in proton translocation. This Vampyrodes caraccioli (Great stripe-faced bat) protein is NADH-ubiquinone oxidoreductase chain 4L (MT-ND4L).